The following is a 500-amino-acid chain: Carnosic acid synthase (500 aa).

Residues 4–24 traverse the membrane as a helical segment; that stretch reads LILLSLAFLASCVVAYSRRRP. Cys-443 provides a ligand contact to heme.

This sequence belongs to the cytochrome P450 family. The cofactor is heme. As to expression, expressed in leaf glandular trichomes.

It is found in the membrane. The catalysed reaction is 11-hydroxyferruginol + 3 reduced [NADPH--hemoprotein reductase] + 3 O2 = carnosate + 3 oxidized [NADPH--hemoprotein reductase] + 4 H2O + 4 H(+). It catalyses the reaction miltiradiene + 2 reduced [NADPH--hemoprotein reductase] + 2 O2 = miltiradien-20-al + 2 oxidized [NADPH--hemoprotein reductase] + 3 H2O + 2 H(+). It carries out the reaction ferruginol + 3 reduced [NADPH--hemoprotein reductase] + 3 O2 = pisiferate + 3 oxidized [NADPH--hemoprotein reductase] + 4 H2O + 4 H(+). Its pathway is secondary metabolite biosynthesis; terpenoid biosynthesis. Monooxygenase involved in the biosynthesis of carnosate, a potent antioxidant labdane-related diterpene natural product. Catalyzes the oxidation of 11-hydroxyferruginol to produce carnosate. Mediates the conversion of miltiradien into miltiradien-20-al. Also involved in the production of pisiferic acid and derivative products from ferruginol. The chain is Carnosic acid synthase from Salvia pomifera (Apple sage).